A 320-amino-acid chain; its full sequence is Methionine import ATP-binding protein MetN (320 aa).

Residues 2–237 form the ABC transporter domain; the sequence is IEIKNVSKYF…PSSEMKKLIG (236 aa). 34–41 contacts ATP; sequence GHSGAGKS.

This sequence belongs to the ABC transporter superfamily. Methionine importer (TC 3.A.1.24) family. The complex is composed of two ATP-binding proteins (MetN), two transmembrane proteins (MetI) and a solute-binding protein (MetQ).

The protein resides in the cell membrane. The enzyme catalyses L-methionine(out) + ATP + H2O = L-methionine(in) + ADP + phosphate + H(+). The catalysed reaction is D-methionine(out) + ATP + H2O = D-methionine(in) + ADP + phosphate + H(+). Its function is as follows. Part of the ABC transporter complex MetNIQ involved in methionine import. Responsible for energy coupling to the transport system. The chain is Methionine import ATP-binding protein MetN from Clostridium acetobutylicum (strain ATCC 824 / DSM 792 / JCM 1419 / IAM 19013 / LMG 5710 / NBRC 13948 / NRRL B-527 / VKM B-1787 / 2291 / W).